The chain runs to 148 residues: Cell division protein SepF (148 aa).

Belongs to the SepF family. Homodimer. Interacts with FtsZ.

The protein resides in the cytoplasm. Cell division protein that is part of the divisome complex and is recruited early to the Z-ring. Probably stimulates Z-ring formation, perhaps through the cross-linking of FtsZ protofilaments. Its function overlaps with FtsA. The protein is Cell division protein SepF of Alkaliphilus metalliredigens (strain QYMF).